Consider the following 151-residue polypeptide: MEVILLEQVVNLGKLGDKVAVKSGYARNYLIPQGRAVSATKENEAHFESRKAELEKAAGDKVAVAERCKQALADLGSVTIPAKAGTEGKLFGSVGAADIAEALTKAGVEIGKKEVRLPEGALRQVGEYELVIHLHPTVEAPIKVVVTGEEE.

Belongs to the bacterial ribosomal protein bL9 family.

Binds to the 23S rRNA. In Nitrosococcus oceani (strain ATCC 19707 / BCRC 17464 / JCM 30415 / NCIMB 11848 / C-107), this protein is Large ribosomal subunit protein bL9.